The chain runs to 331 residues: Anthranilate phosphoribosyltransferase (331 aa).

5-phospho-alpha-D-ribose 1-diphosphate-binding positions include G78, 81–82 (GD), S86, 88–91 (NIST), 106–114 (KHGNKSITS), and S118. G78 contributes to the anthranilate binding site. S90 is a binding site for Mg(2+). Anthranilate is bound at residue N109. R163 serves as a coordination point for anthranilate. D222 and E223 together coordinate Mg(2+).

Belongs to the anthranilate phosphoribosyltransferase family. Homodimer. Mg(2+) serves as cofactor.

It carries out the reaction N-(5-phospho-beta-D-ribosyl)anthranilate + diphosphate = 5-phospho-alpha-D-ribose 1-diphosphate + anthranilate. Its pathway is amino-acid biosynthesis; L-tryptophan biosynthesis; L-tryptophan from chorismate: step 2/5. Catalyzes the transfer of the phosphoribosyl group of 5-phosphorylribose-1-pyrophosphate (PRPP) to anthranilate to yield N-(5'-phosphoribosyl)-anthranilate (PRA). This chain is Anthranilate phosphoribosyltransferase, found in Staphylococcus epidermidis (strain ATCC 35984 / DSM 28319 / BCRC 17069 / CCUG 31568 / BM 3577 / RP62A).